The primary structure comprises 959 residues: DNA-directed RNA polymerase subunit beta'' (959 aa).

The Zn(2+) site is built by Cys211, Cys288, Cys295, and Cys298.

It belongs to the RNA polymerase beta' chain family. RpoC2 subfamily. In plastids the minimal PEP RNA polymerase catalytic core is composed of four subunits: alpha, beta, beta', and beta''. When a (nuclear-encoded) sigma factor is associated with the core the holoenzyme is formed, which can initiate transcription. Zn(2+) is required as a cofactor.

It localises to the plastid. The protein resides in the apicoplast. The enzyme catalyses RNA(n) + a ribonucleoside 5'-triphosphate = RNA(n+1) + diphosphate. DNA-dependent RNA polymerase catalyzes the transcription of DNA into RNA using the four ribonucleoside triphosphates as substrates. The chain is DNA-directed RNA polymerase subunit beta'' from Plasmodium falciparum (isolate 3D7).